Consider the following 729-residue polypeptide: Cullin-6 (729 aa).

The region spanning 659-720 (DRKYEIKACI…EQLYIRRSEN (62 aa)) is the Cullin neddylation domain. Lys673 is covalently cross-linked (Glycyl lysine isopeptide (Lys-Gly) (interchain with G-Cter in NEDD8)).

This sequence belongs to the cullin family. In terms of assembly, probably interacts with skr-3. Post-translationally, neddylated; which enhances the ubiquitination activity of SCF-like complex.

Probable core component of cullin-based SCF-like E3 ubiquitin-protein ligase complexes which mediate the ubiquitination and subsequent proteasomal degradation of target proteins. In Caenorhabditis elegans, this protein is Cullin-6 (cul-6).